The sequence spans 126 residues: MRSTLLFAVILALSSARSLGAVCEESQEQVVPGGGHSKKDSNLYQLPPSLLRRLYDSRVVSLDGLLKMLSKASVGPKESPLPQKRDMHDFFVGLMGKRNLQPDTPVDINQENIPSFGTFKYPPSVE.

A signal peptide spans M1–G20. A propeptide spanning residues A21–Q83 is cleaved from the precursor. At M95 the chain carries Methionine amide. Residues N99 to E126 constitute a propeptide that is removed on maturation. A disordered region spans residues P102 to E126.

The protein belongs to the tachykinin family.

The protein resides in the secreted. Tachykinins are active peptides which excite neurons, evoke behavioral responses, are potent vasodilators and secretagogues, and contract (directly or indirectly) many smooth muscles. Is a critical central regulator of gonadal function. The polypeptide is Tachykinin-3 (TAC3) (Bos taurus (Bovine)).